Reading from the N-terminus, the 409-residue chain is Probable tRNA pseudouridine synthase D (409 aa).

The active-site Nucleophile is the Asp-73. The TRUD domain occupies 146 to 365 (GFPNFFGDQR…SSGDRRIISA (220 aa)).

Belongs to the pseudouridine synthase TruD family.

It catalyses the reaction uridine(13) in tRNA = pseudouridine(13) in tRNA. Could be responsible for synthesis of pseudouridine from uracil-13 in transfer RNAs. This Thermoplasma volcanium (strain ATCC 51530 / DSM 4299 / JCM 9571 / NBRC 15438 / GSS1) protein is Probable tRNA pseudouridine synthase D.